The primary structure comprises 580 residues: Laccase-20 (580 aa).

Residues 1–23 (MVASLLCTVAVAVLAVAAVGGEA) form the signal peptide. 2 consecutive Plastocyanin-like domains span residues 31–147 (VVHE…PRDG) and 156–310 (KDVP…YTGV). Asn-36 and Asn-42 each carry an N-linked (GlcNAc...) asparagine glycan. Cu cation contacts are provided by His-81 and His-83. An N-linked (GlcNAc...) asparagine glycan is attached at Asn-115. His-126 and His-128 together coordinate Cu cation. Residues Asn-200, Asn-339, Asn-373, Asn-392, Asn-399, Asn-429, and Asn-460 are each glycosylated (N-linked (GlcNAc...) asparagine). Positions 419–561 (DFPVRPPRPY…ATAFIVEDGP (143 aa)) constitute a Plastocyanin-like 3 domain. Residues Asn-478, His-481, His-483, His-540, Cys-541, His-542, His-546, and Met-551 each contribute to the Cu cation site. The disordered stretch occupies residues 560-580 (GPTPETSLPPPPPEFKRCDAS).

It belongs to the multicopper oxidase family. Cu cation is required as a cofactor.

Its subcellular location is the secreted. It localises to the extracellular space. The protein resides in the apoplast. It carries out the reaction 4 hydroquinone + O2 = 4 benzosemiquinone + 2 H2O. Functionally, lignin degradation and detoxification of lignin-derived products. The protein is Laccase-20 (LAC20) of Oryza sativa subsp. japonica (Rice).